The primary structure comprises 193 residues: Transcriptional repressor NrdR (193 aa).

Residues 3–34 fold into a zinc finger; it reads CPYCGGLDTQVKDSRPSEDASAIRRRRICPDC. An ATP-cone domain is found at 49–139; the sequence is LTVVKRSGRK…VYKNFREAKD (91 aa). The disordered stretch occupies residues 150-193; that stretch reads DQQDGAVPQAEADRPIGAGPPSEAAQPAAGEGGDAPMRRARSRA.

This sequence belongs to the NrdR family. Zn(2+) is required as a cofactor.

In terms of biological role, negatively regulates transcription of bacterial ribonucleotide reductase nrd genes and operons by binding to NrdR-boxes. The protein is Transcriptional repressor NrdR of Methylobacterium nodulans (strain LMG 21967 / CNCM I-2342 / ORS 2060).